Here is a 301-residue protein sequence, read N- to C-terminus: UBX domain-containing protein 2 (301 aa).

The interval 1–61 is disordered; that stretch reads MSRNIRTFRD…AARGPDSEAH (61 aa). Positions 89-153 constitute an SEP domain; that stretch reads TISLTLHLWS…KVNRHHEEYV (65 aa). Positions 176–200 are disordered; sequence GQSSSSATTAGTSSATTDHNPDHTA. Over residues 178 to 192 the composition is skewed to low complexity; the sequence is SSSSATTAGTSSATT. Residues 218-295 form the UBX domain; the sequence is MNEPTTNIQI…NVLNSVVAVK (78 aa).

It belongs to the NSFL1C family. Interacts with cdc-48.1 (via N-terminus) and cdc-48.2 (via N-terminus). Interacts with kinase air-1. In terms of tissue distribution, expressed in the germline (at protein level). Expressed in spermatocytes but not in mature sperm (at protein level). Ubiquitously expressed. Predominantly expressed in the spermatheca.

It localises to the cytoplasm. It is found in the perinuclear region. Its subcellular location is the nucleus. The protein localises to the cytoskeleton. The protein resides in the microtubule organizing center. It localises to the centrosome. Its function is as follows. Ubiquitin-binding protein which acts as an adapter for ATPase cdc-48.1 and/or cdc-48.2, conferring substrate specificity. Together with ubxn-2 and ubxn-3, plays a role in hermaphrodite spermatogenesis probably by promoting the degradation of sex determination terminal factor tra-1. Probably in association with ATPase cdc-48.1 or/and cdc-48.2, regulates the centrosomal levels of kinase air-1 levels during mitotic progression by promoting air-1 removal from centrosomes in prophase. Also, regulates spindle orientation in the one-cell embryo by controlling centration and rotation of the pronuclei-centrosome complex in prophase. The chain is UBX domain-containing protein 2 from Caenorhabditis elegans.